The sequence spans 80 residues: Teretoxin Tsu6.5 (80 aa).

The signal sequence occupies residues 1 to 21 (MAINGRLLCLCLVLGLVFESL). Positions 22-42 (GHPSVQEKRAAEDSKPSGERR) are excised as a propeptide.

The protein belongs to the teretoxin M (TM) superfamily. Post-translationally, contains 3 disulfide bonds. As to expression, expressed by the venom duct.

The protein localises to the secreted. This chain is Teretoxin Tsu6.5, found in Terebra subulata (Chocolate spotted auger).